The sequence spans 137 residues: Flagellar basal body rod protein FlgB (137 aa).

It belongs to the flagella basal body rod proteins family. In terms of assembly, the basal body constitutes a major portion of the flagellar organelle and consists of a number of rings mounted on a central rod. In Gram-negative bacteria, at least four rings, L, P, S and M are present, whereas Gram-positive bacteria lack the L and P rings. The rod consists of about 26 subunits of FlgG in the distal portion, and FlgB, FlgC and FlgF build up the proximal portion of the rod with about 6 subunits each. Rod assembly occurs by export via the flagellum-specific pathway of its constituent proteins and by their incorporation into the rod structure in the probable order of FlgB, FlgC, FlgF and FlgG. Another protein, FliE, also assembles onto the stable rod structure.

The protein resides in the bacterial flagellum basal body. Its function is as follows. Structural component of flagellum, the bacterial motility apparatus. Part of the rod structure of flagellar basal body. The protein is Flagellar basal body rod protein FlgB of Yersinia ruckeri.